The following is a 126-amino-acid chain: Large ribosomal subunit protein bL12 (126 aa).

It belongs to the bacterial ribosomal protein bL12 family. In terms of assembly, homodimer. Part of the ribosomal stalk of the 50S ribosomal subunit. Forms a multimeric L10(L12)X complex, where L10 forms an elongated spine to which 2 to 4 L12 dimers bind in a sequential fashion. Binds GTP-bound translation factors.

In terms of biological role, forms part of the ribosomal stalk which helps the ribosome interact with GTP-bound translation factors. Is thus essential for accurate translation. The sequence is that of Large ribosomal subunit protein bL12 from Blochmanniella floridana.